A 155-amino-acid chain; its full sequence is Putative pre-16S rRNA nuclease (155 aa).

The protein belongs to the YqgF nuclease family.

Its subcellular location is the cytoplasm. Could be a nuclease involved in processing of the 5'-end of pre-16S rRNA. The chain is Putative pre-16S rRNA nuclease from Xanthomonas campestris pv. campestris (strain 8004).